We begin with the raw amino-acid sequence, 337 residues long: Phosphate acyltransferase (337 aa).

Belongs to the PlsX family. In terms of assembly, homodimer. Probably interacts with PlsY.

The protein localises to the cytoplasm. It carries out the reaction a fatty acyl-[ACP] + phosphate = an acyl phosphate + holo-[ACP]. It participates in lipid metabolism; phospholipid metabolism. Its function is as follows. Catalyzes the reversible formation of acyl-phosphate (acyl-PO(4)) from acyl-[acyl-carrier-protein] (acyl-ACP). This enzyme utilizes acyl-ACP as fatty acyl donor, but not acyl-CoA. This Listeria innocua serovar 6a (strain ATCC BAA-680 / CLIP 11262) protein is Phosphate acyltransferase.